The following is a 349-amino-acid chain: MLDNSFYTAEVQGPYETASIGRLELEEGGVIEDCWLAYATAGTLNEDKSNAILIPTWYSGTHQTWFQQYIGTDHALDPSKYFIISINQIGNGLSVSPANTADDSISMSKFPNVRIGDDVVAQDRLLRQEFGITELFAVVGGSMGAQQTYEWIVRFPDQVHRAAPIAGTAKNTPHDFIFTQTLNETVEADPGFNGGEYSSHEEVADGLRRQSHLWAAMGFSTEFWKQEAWRRLGLESKESVLADFLDPLFMSMDPNTLLNNAWKWQHGDVSRHTGGDLAAALGRVKAKTFVMPISEDMFFPVRDCAAEQALIPGSELRVIEDIAGHLGLFNVSENYIPQIDKNLKELFES.

One can recognise an AB hydrolase-1 domain in the interval 60 to 329 (GTHQTWFQQY…EDIAGHLGLF (270 aa)). Residue S142 is the Nucleophile of the active site. Active-site residues include D296 and H325.

The protein belongs to the AB hydrolase superfamily. Acetyl esterase family. As to quaternary structure, homodimer.

Its function is as follows. Esterase that catalyzes the hydrolysis of 4-nitrophenyl acetate in vitro. In Corynebacterium glutamicum (strain ATCC 13032 / DSM 20300 / JCM 1318 / BCRC 11384 / CCUG 27702 / LMG 3730 / NBRC 12168 / NCIMB 10025 / NRRL B-2784 / 534), this protein is Probable esterase Cgl0839.